The chain runs to 748 residues: Elongation factor G, mitochondrial (748 aa).

The transit peptide at 1-14 (MTISSFLRVRHSLA) directs the protein to the mitochondrion. The region spanning 40-318 (ERIRNIGISA…VLNYLPHPGE (279 aa)) is the tr-type G domain. GTP-binding positions include 49–56 (AHIDSGKT), 116–120 (DTPGH), and 170–173 (NKLD).

It belongs to the TRAFAC class translation factor GTPase superfamily. Classic translation factor GTPase family. EF-G/EF-2 subfamily.

It localises to the mitochondrion. The protein operates within protein biosynthesis; polypeptide chain elongation. Functionally, mitochondrial GTPase that catalyzes the GTP-dependent ribosomal translocation step during translation elongation. During this step, the ribosome changes from the pre-translocational (PRE) to the post-translocational (POST) state as the newly formed A-site-bound peptidyl-tRNA and P-site-bound deacylated tRNA move to the P and E sites, respectively. Catalyzes the coordinated movement of the two tRNA molecules, the mRNA and conformational changes in the ribosome. The polypeptide is Elongation factor G, mitochondrial (Aedes aegypti (Yellowfever mosquito)).